The sequence spans 491 residues: NADPH:adrenodoxin oxidoreductase, mitochondrial (491 aa).

The N-terminal 32 residues, 1–32, are a transit peptide targeting the mitochondrion; the sequence is MASRCWRWWGWSAWPRTRLPPAGSTPSFCHHF. Positions 49, 69, 77, and 113 each coordinate FAD. Residues 184–187, 228–229, and E240 each bind NADP(+); these read QGNV and RR. A phosphoserine mark is found at S310 and S317. FAD is bound by residues W398 and 405–407; that span reads GVI. G405 is an NADP(+) binding site.

It belongs to the ferredoxin--NADP reductase type 1 family. In terms of assembly, monomer. Interacts directly with FDX1. FAD is required as a cofactor.

The protein resides in the mitochondrion. The protein localises to the mitochondrion inner membrane. The catalysed reaction is 2 reduced [adrenodoxin] + NADP(+) + H(+) = 2 oxidized [adrenodoxin] + NADPH. It carries out the reaction 2 reduced [2Fe-2S]-[ferredoxin] + NADP(+) + H(+) = 2 oxidized [2Fe-2S]-[ferredoxin] + NADPH. It functions in the pathway steroid metabolism; cholesterol metabolism. Functionally, serves as the first electron transfer protein in all the mitochondrial P450 systems including cholesterol side chain cleavage in all steroidogenic tissues, steroid 11-beta hydroxylation in the adrenal cortex, 25-OH-vitamin D3-24 hydroxylation in the kidney, and sterol C-27 hydroxylation in the liver. Also acts as a ferredoxin--NADP(+) reductase essential for coenzyme Q biosynthesis: together with FDX2, transfers the electrons required for the hydroxylation reaction performed by COQ6. The polypeptide is NADPH:adrenodoxin oxidoreductase, mitochondrial (Homo sapiens (Human)).